We begin with the raw amino-acid sequence, 271 residues long: Formamidopyrimidine-DNA glycosylase (271 aa).

The active-site Schiff-base intermediate with DNA is the Pro-2. Residue Glu-3 is the Proton donor of the active site. Residue Lys-57 is the Proton donor; for beta-elimination activity of the active site. 3 residues coordinate DNA: His-90, Arg-109, and Lys-151. An FPG-type zinc finger spans residues 236 to 270; that stretch reads HVYGRGGETCTQCGNLLSEIRLGQRTTVFCGICQT. Catalysis depends on Arg-260, which acts as the Proton donor; for delta-elimination activity.

Belongs to the FPG family. As to quaternary structure, monomer. It depends on Zn(2+) as a cofactor.

The enzyme catalyses Hydrolysis of DNA containing ring-opened 7-methylguanine residues, releasing 2,6-diamino-4-hydroxy-5-(N-methyl)formamidopyrimidine.. It carries out the reaction 2'-deoxyribonucleotide-(2'-deoxyribose 5'-phosphate)-2'-deoxyribonucleotide-DNA = a 3'-end 2'-deoxyribonucleotide-(2,3-dehydro-2,3-deoxyribose 5'-phosphate)-DNA + a 5'-end 5'-phospho-2'-deoxyribonucleoside-DNA + H(+). In terms of biological role, involved in base excision repair of DNA damaged by oxidation or by mutagenic agents. Acts as a DNA glycosylase that recognizes and removes damaged bases. Has a preference for oxidized purines, such as 7,8-dihydro-8-oxoguanine (8-oxoG). Has AP (apurinic/apyrimidinic) lyase activity and introduces nicks in the DNA strand. Cleaves the DNA backbone by beta-delta elimination to generate a single-strand break at the site of the removed base with both 3'- and 5'-phosphates. The sequence is that of Formamidopyrimidine-DNA glycosylase from Shewanella sp. (strain MR-7).